A 115-amino-acid polypeptide reads, in one-letter code: NADH-ubiquinone oxidoreductase chain 3 (115 aa).

A run of 3 helical transmembrane segments spans residues alanine 4–leucine 24, phenylalanine 55–leucine 75, and leucine 84–tyrosine 104.

The protein belongs to the complex I subunit 3 family. As to quaternary structure, core subunit of respiratory chain NADH dehydrogenase (Complex I) which is composed of 45 different subunits. Interacts with TMEM186. Interacts with TMEM242.

The protein localises to the mitochondrion inner membrane. The catalysed reaction is a ubiquinone + NADH + 5 H(+)(in) = a ubiquinol + NAD(+) + 4 H(+)(out). Its function is as follows. Core subunit of the mitochondrial membrane respiratory chain NADH dehydrogenase (Complex I) which catalyzes electron transfer from NADH through the respiratory chain, using ubiquinone as an electron acceptor. Essential for the catalytic activity of complex I. In Phoca vitulina (Harbor seal), this protein is NADH-ubiquinone oxidoreductase chain 3.